The following is a 205-amino-acid chain: N-(5'-phosphoribosyl)anthranilate isomerase (205 aa).

Belongs to the TrpF family.

It catalyses the reaction N-(5-phospho-beta-D-ribosyl)anthranilate = 1-(2-carboxyphenylamino)-1-deoxy-D-ribulose 5-phosphate. It participates in amino-acid biosynthesis; L-tryptophan biosynthesis; L-tryptophan from chorismate: step 3/5. The sequence is that of N-(5'-phosphoribosyl)anthranilate isomerase from Thermotoga petrophila (strain ATCC BAA-488 / DSM 13995 / JCM 10881 / RKU-1).